Consider the following 375-residue polypeptide: Cinnamyl alcohol dehydrogenase 3 (375 aa).

Zn(2+) is bound at residue C44. S46 is an NADP(+) binding site. Residues H66, E67, C97, C100, C103, C111, and C160 each contribute to the Zn(2+) site. NADP(+) is bound by residues T164, 186 to 191 (GLGGLG), 209 to 214 (SRSSEK), T249, G273, and 296 to 298 (SQI).

Belongs to the zinc-containing alcohol dehydrogenase family. As to quaternary structure, homodimer. Zn(2+) is required as a cofactor. In terms of tissue distribution, expressed in the root tips. Expressed in the apical meristematic regions, leaf veins and at the base of the trichomes. Expressed at the base of the stems. Expressed in the abscission zones of newly formed siliques.

The enzyme catalyses (E)-cinnamyl alcohol + NADP(+) = (E)-cinnamaldehyde + NADPH + H(+). It catalyses the reaction (E)-coniferol + NADP(+) = (E)-coniferaldehyde + NADPH + H(+). It carries out the reaction (E)-sinapyl alcohol + NADP(+) = (E)-sinapaldehyde + NADPH + H(+). The catalysed reaction is (E)-4-coumaroyl alcohol + NADP(+) = (E)-4-coumaraldehyde + NADPH + H(+). The enzyme catalyses (E)-caffeyl alcohol + NADP(+) = (E)-caffeyl aldehyde + NADPH + H(+). The protein operates within aromatic compound metabolism; phenylpropanoid biosynthesis. Its function is as follows. Involved in lignin biosynthesis. Catalyzes the final step specific for the production of lignin monomers. Catalyzes the NADPH-dependent reduction of coniferaldehyde, 5-hydroxyconiferaldehyde, sinapaldehyde, 4-coumaraldehyde and caffeyl aldehyde to their respective alcohols. In Arabidopsis thaliana (Mouse-ear cress), this protein is Cinnamyl alcohol dehydrogenase 3.